We begin with the raw amino-acid sequence, 153 residues long: UPF0260 protein YcgN (153 aa).

This sequence belongs to the UPF0260 family.

This Salmonella typhi protein is UPF0260 protein YcgN.